The sequence spans 189 residues: Recombination protein RecR (189 aa).

The C4-type zinc-finger motif lies at 48–63; the sequence is CQTCFHLSAEPLCDIC. A Toprim domain is found at 71–165; that stretch reads QLLCVVADSR…QVSRIAYGLP (95 aa).

It belongs to the RecR family.

In terms of biological role, may play a role in DNA repair. It seems to be involved in an RecBC-independent recombinational process of DNA repair. It may act with RecF and RecO. The polypeptide is Recombination protein RecR (Prochlorococcus marinus (strain MIT 9313)).